The chain runs to 1241 residues: ATP-dependent helicase/nuclease subunit A (1241 aa).

One can recognise a UvrD-like helicase ATP-binding domain in the interval 12 to 485; that stretch reads SQWTDDQWKA…IDLAKNFRSR (474 aa). Residue 33–40 participates in ATP binding; the sequence is AAAGSGKT. The 301-residue stretch at 505 to 805 folds into the UvrD-like helicase C-terminal domain; that stretch reads GEIDYDADAE…RIMTIHKSKG (301 aa).

It belongs to the helicase family. AddA subfamily. As to quaternary structure, heterodimer of AddA and AddB/RexB. The cofactor is Mg(2+).

It carries out the reaction Couples ATP hydrolysis with the unwinding of duplex DNA by translocating in the 3'-5' direction.. It catalyses the reaction ATP + H2O = ADP + phosphate + H(+). Functionally, the heterodimer acts as both an ATP-dependent DNA helicase and an ATP-dependent, dual-direction single-stranded exonuclease. Recognizes the chi site generating a DNA molecule suitable for the initiation of homologous recombination. The AddA nuclease domain is required for chi fragment generation; this subunit has the helicase and 3' -&gt; 5' nuclease activities. This is ATP-dependent helicase/nuclease subunit A from Bacillus mycoides (strain KBAB4) (Bacillus weihenstephanensis).